The chain runs to 385 residues: Putative ribosomal RNA large subunit methyltransferase MJ1653 (385 aa).

The PUA domain maps to threonine 2–isoleucine 81.

It belongs to the methyltransferase superfamily. RlmI family.

The protein localises to the cytoplasm. The chain is Putative ribosomal RNA large subunit methyltransferase MJ1653 from Methanocaldococcus jannaschii (strain ATCC 43067 / DSM 2661 / JAL-1 / JCM 10045 / NBRC 100440) (Methanococcus jannaschii).